Here is a 145-residue protein sequence, read N- to C-terminus: 3-hydroxyacyl-[acyl-carrier-protein] dehydratase FabZ (145 aa).

Histidine 47 is an active-site residue.

The protein belongs to the thioester dehydratase family. FabZ subfamily.

The protein resides in the cytoplasm. It catalyses the reaction a (3R)-hydroxyacyl-[ACP] = a (2E)-enoyl-[ACP] + H2O. Functionally, involved in unsaturated fatty acids biosynthesis. Catalyzes the dehydration of short chain beta-hydroxyacyl-ACPs and long chain saturated and unsaturated beta-hydroxyacyl-ACPs. This Geotalea uraniireducens (strain Rf4) (Geobacter uraniireducens) protein is 3-hydroxyacyl-[acyl-carrier-protein] dehydratase FabZ.